Reading from the N-terminus, the 411-residue chain is ATPase GET3B (411 aa).

Residues 1-67 (MATLSSYLLS…RRRNSLQVKS (67 aa)) constitute a chloroplast transit peptide. Residue 95 to 102 (KGGVGKTS) coordinates ATP. The active site involves Asp-124. Asn-348 provides a ligand contact to ATP.

The protein belongs to the arsA ATPase family.

It is found in the plastid. The protein localises to the chloroplast stroma. The enzyme catalyses ATP + H2O = ADP + phosphate + H(+). This chain is ATPase GET3B, found in Arabidopsis thaliana (Mouse-ear cress).